Reading from the N-terminus, the 101-residue chain is Small ribosomal subunit protein uS14 (101 aa).

Basic and acidic residues predominate over residues 1–11; the sequence is MAKKSAIETNE. A disordered region spans residues 1–20; it reads MAKKSAIETNERRRKLATGH.

This sequence belongs to the universal ribosomal protein uS14 family. As to quaternary structure, part of the 30S ribosomal subunit. Contacts proteins S3 and S10.

In terms of biological role, binds 16S rRNA, required for the assembly of 30S particles and may also be responsible for determining the conformation of the 16S rRNA at the A site. This Xanthobacter autotrophicus (strain ATCC BAA-1158 / Py2) protein is Small ribosomal subunit protein uS14.